A 174-amino-acid polypeptide reads, in one-letter code: ATP-dependent protease subunit HslV (174 aa).

The active site involves Thr2. Na(+) contacts are provided by Gly157, Cys160, and Thr163.

Belongs to the peptidase T1B family. HslV subfamily. A double ring-shaped homohexamer of HslV is capped on each side by a ring-shaped HslU homohexamer. The assembly of the HslU/HslV complex is dependent on binding of ATP.

It localises to the cytoplasm. It catalyses the reaction ATP-dependent cleavage of peptide bonds with broad specificity.. Allosterically activated by HslU binding. Protease subunit of a proteasome-like degradation complex believed to be a general protein degrading machinery. The protein is ATP-dependent protease subunit HslV of Shewanella piezotolerans (strain WP3 / JCM 13877).